The following is a 140-amino-acid chain: FlaA locus uncharacterized protein YlxG (140 aa).

Positions 1-21 (MTSISSEYKLPEKTNTVSTNN) are disordered.

The protein belongs to the FlgD family.

The protein is FlaA locus uncharacterized protein YlxG (ylxG) of Bacillus subtilis (strain 168).